The sequence spans 207 residues: Outer-membrane lipoprotein LolB (207 aa).

A signal peptide spans 1–21 (MPQRKISFYRLLPLATLLLAA). Cysteine 22 is lipidated: N-palmitoyl cysteine. Cysteine 22 carries the S-diacylglycerol cysteine lipid modification.

This sequence belongs to the LolB family. In terms of assembly, monomer.

The protein resides in the cell outer membrane. In terms of biological role, plays a critical role in the incorporation of lipoproteins in the outer membrane after they are released by the LolA protein. This Yersinia enterocolitica serotype O:8 / biotype 1B (strain NCTC 13174 / 8081) protein is Outer-membrane lipoprotein LolB.